We begin with the raw amino-acid sequence, 261 residues long: Carnitinyl-CoA dehydratase (261 aa).

Residue glutamate 111 is the Nucleophile of the active site. Glutamate 131 (proton acceptor) is an active-site residue.

The protein belongs to the enoyl-CoA hydratase/isomerase family.

It catalyses the reaction (R)-carnitinyl-CoA = crotonobetainyl-CoA + H2O. The protein operates within amine and polyamine metabolism; carnitine metabolism. Functionally, catalyzes the reversible dehydration of L-carnitinyl-CoA to crotonobetainyl-CoA. The chain is Carnitinyl-CoA dehydratase from Salmonella enteritidis PT4 (strain P125109).